Here is a 341-residue protein sequence, read N- to C-terminus: MTETNKNVDALEKINQMSSADYYFDSYSHFGIHEEMLKDEVRTLAYRRAIINNRKLFEGKVVLDVGCGTGILCMFAAQAGAKMVIGVDNSEMLPIAQKIITANNFDKTITLIKGKMEEVVLPVDKVDIIISEWMGYFMLYEGMLDTVLYARDKYLVPGGVILPDKASLYITAIEDQDYKEEKINYWNNVYGFDMSCIREIALKEPLVDVVQPNMIVTNDCCILTVDIMTITKDELKFRSDFKLKALRDDLIHAFVVYFDIEFSKGDKPVCFSTGPKAKYTHWKQSIMYFEDHIKIQQGEIITGTMDCAPFDKNQRDLKIKLDFNFAGELMKSSSSLEYHMR.

The 296-residue stretch at 20–315 (ADYYFDSYSH…DCAPFDKNQR (296 aa)) folds into the SAM-dependent MTase PRMT-type domain. 5 residues coordinate S-adenosyl-L-methionine: histidine 33, arginine 42, glycine 66, aspartate 88, and glutamate 117. Active-site residues include glutamate 132 and glutamate 141.

The protein belongs to the class I-like SAM-binding methyltransferase superfamily. Protein arginine N-methyltransferase family.

Its subcellular location is the nucleus. It localises to the cytoplasm. It is found in the cytosol. It carries out the reaction L-arginyl-[protein] + 2 S-adenosyl-L-methionine = N(omega),N(omega)-dimethyl-L-arginyl-[protein] + 2 S-adenosyl-L-homocysteine + 2 H(+). The enzyme catalyses L-arginyl-[protein] + S-adenosyl-L-methionine = N(omega)-methyl-L-arginyl-[protein] + S-adenosyl-L-homocysteine + H(+). Its function is as follows. Arginine methyltransferase that methylates the guanidino nitrogens of arginyl residues present in proteins such as ribonucleoproteins and histones. The chain is Protein arginine N-methyltransferase 1 (prmt1) from Dictyostelium discoideum (Social amoeba).